The following is a 249-amino-acid chain: Enolase-phosphatase E1 (249 aa).

Mg(2+)-binding residues include Asp9 and Glu11. Residues 137–138 and Lys177 each bind substrate; that span reads SS. Residue Asp204 coordinates Mg(2+).

The protein belongs to the HAD-like hydrolase superfamily. MasA/MtnC family. In terms of assembly, monomer. The cofactor is Mg(2+).

The protein resides in the cytoplasm. It localises to the nucleus. The enzyme catalyses 5-methylsulfanyl-2,3-dioxopentyl phosphate + H2O = 1,2-dihydroxy-5-(methylsulfanyl)pent-1-en-3-one + phosphate. The protein operates within amino-acid biosynthesis; L-methionine biosynthesis via salvage pathway; L-methionine from S-methyl-5-thio-alpha-D-ribose 1-phosphate: step 3/6. Its pathway is amino-acid biosynthesis; L-methionine biosynthesis via salvage pathway; L-methionine from S-methyl-5-thio-alpha-D-ribose 1-phosphate: step 4/6. Its function is as follows. Bifunctional enzyme that catalyzes the enolization of 2,3-diketo-5-methylthiopentyl-1-phosphate (DK-MTP-1-P) into the intermediate 2-hydroxy-3-keto-5-methylthiopentenyl-1-phosphate (HK-MTPenyl-1-P), which is then dephosphorylated to form the acireductone 1,2-dihydroxy-3-keto-5-methylthiopentene (DHK-MTPene). The protein is Enolase-phosphatase E1 of Lodderomyces elongisporus (strain ATCC 11503 / CBS 2605 / JCM 1781 / NBRC 1676 / NRRL YB-4239) (Yeast).